We begin with the raw amino-acid sequence, 547 residues long: DNA mismatch repair protein MutL (547 aa).

Belongs to the DNA mismatch repair MutL/HexB family.

Functionally, this protein is involved in the repair of mismatches in DNA. It is required for dam-dependent methyl-directed DNA mismatch repair. May act as a 'molecular matchmaker', a protein that promotes the formation of a stable complex between two or more DNA-binding proteins in an ATP-dependent manner without itself being part of a final effector complex. The sequence is that of DNA mismatch repair protein MutL from Deinococcus radiodurans (strain ATCC 13939 / DSM 20539 / JCM 16871 / CCUG 27074 / LMG 4051 / NBRC 15346 / NCIMB 9279 / VKM B-1422 / R1).